Consider the following 266-residue polypeptide: Chymotrypsin-like elastase family member 1 (266 aa).

A signal peptide spans 1 to 16; the sequence is MLRFLVLATLVLYGHS. The propeptide at 17–26 is activation peptide; sequence TRDFPETNAR. Residues 27–264 enclose the Peptidase S1 domain; the sequence is VVGGTEARKN…YISWINNVIA (238 aa). The cysteines at positions 56 and 72 are disulfide-linked. The active-site Charge relay system is histidine 71. Glutamate 85, asparagine 87, glutamine 90, and glutamate 95 together coordinate Ca(2+). Residue asparagine 87 is glycosylated (N-linked (GlcNAc...) asparagine). Aspartate 119 serves as the catalytic Charge relay system. 3 cysteine pairs are disulfide-bonded: cysteine 153–cysteine 220, cysteine 184–cysteine 200, and cysteine 210–cysteine 240. Serine 214 (charge relay system) is an active-site residue. Residue asparagine 241 is glycosylated (N-linked (GlcNAc...) asparagine).

This sequence belongs to the peptidase S1 family. Elastase subfamily. Ca(2+) serves as cofactor.

Its subcellular location is the secreted. It carries out the reaction Hydrolysis of proteins, including elastin. Preferential cleavage: Ala-|-Xaa.. In terms of biological role, serine proteases that hydrolyze many proteins in addition to elastin. In Felis catus (Cat), this protein is Chymotrypsin-like elastase family member 1 (CELA1).